Reading from the N-terminus, the 25-residue chain is Caerin-2.3 (25 aa).

In terms of tissue distribution, expressed by the skin parotoid and/or rostral glands.

Its subcellular location is the secreted. Functionally, acts as a male sex pheromone that attracts females. Has no antimicrobial activity. The sequence is that of Caerin-2.3 from Ranoidea caerulea (Green tree frog).